The primary structure comprises 212 residues: Transcriptional repressor CcpN (212 aa).

The HTH deoR-type domain occupies 6 to 70 (LNKRQEHILQ…FYTGKTGTQL (65 aa)). A DNA-binding region (H-T-H motif) is located at residues 23 to 42 (ITGEHIAEKLNLTRATLRPD). 2 consecutive CBS domains span residues 83–139 (FQSI…QQEL) and 148–211 (MTRM…ENEI).

Its function is as follows. Transcription repressor that binds to the promoter of gapB and pckA genes, preventing their expression. Acts as a regulator for catabolite repression of gluconeogenic genes. This Bacillus subtilis (strain 168) protein is Transcriptional repressor CcpN (ccpN).